Reading from the N-terminus, the 419-residue chain is MSGNSSTDMYLFKKSLRELKGKKGKGTELISVYVPAGRRLSDISQYLRQELSQSSNIKSKTTMKNVQSAIEVILQRLKLLKEPLEMGVIIFAGMIPRGGPGTEKMEVYVLEPPEPVKTFVYRCDSLFYTDPLEDFIQDTEVYGVILVDRNEATIGTVKGKTITVLKKLTSGVPGKFKAGGQSARRLERLIDDAAHQFMVRIGEYATESFMPILEEKKLKGLLLGGPGNTKNEFAEKDYLHHELKKKIIDTFDLCYTEEFGIRELLEKASDLLRDLDLMKEKNLIQRFFKELIKDDGGLSAYGEAQVMKYLGMGAIDTLIVTEDIGITRVTVKCNNCDYTQEVNVKTNEMFKFEDQLKTKACPTCGGAMYIDEEKDIIEYLSELCNVHNTDIIVVSTDTEEGSQISRAFKGMAAILRYKL.

The protein belongs to the eukaryotic release factor 1 family. As to quaternary structure, heterodimer of two subunits, one of which binds GTP.

Its subcellular location is the cytoplasm. Functionally, directs the termination of nascent peptide synthesis (translation) in response to the termination codons UAA, UAG and UGA. In Methanococcus maripaludis (strain C7 / ATCC BAA-1331), this protein is Peptide chain release factor subunit 1.